A 359-amino-acid chain; its full sequence is Alanine racemase (359 aa).

The active-site Proton acceptor; specific for D-alanine is Lys34. Residue Lys34 is modified to N6-(pyridoxal phosphate)lysine. Arg129 lines the substrate pocket. Tyr256 acts as the Proton acceptor; specific for L-alanine in catalysis. Met304 contributes to the substrate binding site.

It belongs to the alanine racemase family. Pyridoxal 5'-phosphate serves as cofactor.

The enzyme catalyses L-alanine = D-alanine. Its pathway is amino-acid biosynthesis; D-alanine biosynthesis; D-alanine from L-alanine: step 1/1. In terms of biological role, catalyzes the interconversion of L-alanine and D-alanine. May also act on other amino acids. In Photobacterium profundum (strain SS9), this protein is Alanine racemase (alr).